The primary structure comprises 309 residues: Protein-L-isoaspartate O-methyltransferase 2 (309 aa).

The short motif at 23–28 (KKRKKK) is the Nuclear localization signal element. Ser-144 is a catalytic residue.

The protein belongs to the methyltransferase superfamily. L-isoaspartyl/D-aspartyl protein methyltransferase family. Expressed in rosette leaves, stems, cauline leaves, flowers and developing seeds.

It localises to the nucleus. The catalysed reaction is [protein]-L-isoaspartate + S-adenosyl-L-methionine = [protein]-L-isoaspartate alpha-methyl ester + S-adenosyl-L-homocysteine. Its function is as follows. Catalyzes the methyl esterification of L-isoaspartyl residues in peptides and proteins that result from spontaneous decomposition of normal L-aspartyl and L-asparaginyl residues. It plays a role in the repair and/or degradation of damaged proteins. The chain is Protein-L-isoaspartate O-methyltransferase 2 (PIMT2) from Arabidopsis thaliana (Mouse-ear cress).